A 109-amino-acid polypeptide reads, in one-letter code: Ferredoxin CarAc (109 aa).

Residues 3–108 (AKVRVIFRAA…GLTLELPKAQ (106 aa)) form the 2Fe-2S ferredoxin-type domain. 4 residues coordinate [2Fe-2S] cluster: Cys43, Cys49, Cys52, and Cys89.

This sequence belongs to the adrenodoxin/putidaredoxin family. In terms of assembly, monomer. Carbazole 1,9a-dioxygenase complex consists of a terminal oxygenase component CarAa, a ferredoxin reductase component fdr and a ferredoxin component CarAc. Requires [2Fe-2S] cluster as cofactor.

In terms of biological role, part of the multicomponent carbazole 1,9a-dioxygenase (CARDO), that converts carbazole (CAR) into 2-aminobiphenyl-2,3-diol. Acts as a mediator in the electron transfer from fdr to CarAa. The polypeptide is Ferredoxin CarAc (carAc) (Sphingomonas sp).